Here is a 241-residue protein sequence, read N- to C-terminus: MEADALSPVELGLLLLPFVVMLLAALCVRCRELPASYDSASTESLYPRSILIKPPQITVPRTPATSYPLVTSFPPLRQPDLLPIPRSPQPLGGSHRMPSSRQNSDDANSVASYENQEPARKNVDEDEDEDDYPEGYLVVLPDSSPAAVPVVSSAPVPSNPDLGDSAFSMESCEDYVNVPESEESAEASLDGSREYVNVSQDAQPVIRAELASVTSQEVEDEEEEDVDGEEAPDYENLQELN.

Topologically, residues 1–4 are extracellular; the sequence is MEAD. The helical; Signal-anchor for type III membrane protein transmembrane segment at 5–28 threads the bilayer; sequence ALSPVELGLLLLPFVVMLLAALCV. Residues cysteine 27 and cysteine 30 are each lipidated (S-palmitoyl cysteine). Residues 29 to 241 lie on the Cytoplasmic side of the membrane; that stretch reads RCRELPASYD…PDYENLQELN (213 aa). Residues serine 41, serine 44, serine 87, serine 104, serine 109, and serine 112 each carry the phosphoserine modification. The segment at 78 to 139 is disordered; the sequence is QPDLLPIPRS…DDYPEGYLVV (62 aa). Over residues 97–115 the composition is skewed to polar residues; sequence MPSSRQNSDDANSVASYEN. A compositionally biased stretch (acidic residues) spans 124–133; it reads DEDEDEDDYP. The tract at residues 136-139 is interaction with PLCG1; that stretch reads YLVV. At tyrosine 175 the chain carries Phosphotyrosine. 2 interaction with GRB2, GRAP2 and PIK3R1 regions span residues 175-178 and 195-198; these read YVNV. A phosphoserine mark is found at serine 199, serine 212, and serine 215. Residues 209–241 form a disordered region; that stretch reads ELASVTSQEVEDEEEEDVDGEEAPDYENLQELN. A compositionally biased stretch (acidic residues) spans 217-233; sequence EVEDEEEEDVDGEEAPD. Phosphotyrosine is present on tyrosine 234.

As to quaternary structure, when phosphorylated, interacts directly with the PIK3R1 subunit of phosphoinositide 3-kinase and the SH2 domains of GRB2, GRAP, GRAP2, PLCG1 and PLCG2. Interacts indirectly with CBL, SOS, VAV, and LCP2. Interacts with SHB, SKAP2 and CLNK. Interacts with FCGR1A. Interacts with GRB2, PLCG1 and THEMIS upon TCR activation in thymocytes. Interacts with THEMIS2. In terms of processing, phosphorylated on tyrosines by ZAP70 upon TCR activation, or by SYK upon other immunoreceptor activation; which leads to the recruitment of multiple signaling molecules. Is one of the most prominently tyrosine-phosphorylated proteins detected following TCR engagement. May be dephosphorylated by PTPRJ. Palmitoylation of Cys-27 and Cys-30 is required for raft targeting and efficient phosphorylation. Post-translationally, phosphorylated on tyrosines by ZAP70 upon TCR activation, or by SYK upon other immunoreceptor activation; which leads to the recruitment of multiple signaling molecules. Is one of the most prominently tyrosine-phosphorylated proteins detected following TCR engagement. May be dephosphorylated by PTPRJ. Phosphorylated by ITK leading to the recruitment of VAV1 to LAT-containing complexes. In terms of processing, 'Lys-63'-linked ubiquitinated by TRAF6. Expressed in NK cells. Present in lymph node, spleen and thymus (at protein level).

The protein localises to the cell membrane. Required for TCR (T-cell antigen receptor)- and pre-TCR-mediated signaling, both in mature T-cells and during their development. Involved in FCGR3 (low affinity immunoglobulin gamma Fc region receptor III)-mediated signaling in natural killer cells and FCER1 (high affinity immunoglobulin epsilon receptor)-mediated signaling in mast cells. Couples activation of these receptors and their associated kinases with distal intracellular events such as mobilization of intracellular calcium stores, PKC activation, MAPK activation or cytoskeletal reorganization through the recruitment of PLCG1, GRB2, GRAP2, and other signaling molecules. The chain is Linker for activation of T-cells family member 1 (Lat) from Rattus norvegicus (Rat).